Here is a 259-residue protein sequence, read N- to C-terminus: L-erythrulose-1-phosphate isomerase (259 aa).

H102 acts as the Electrophile in catalysis. Catalysis depends on E174, which acts as the Proton acceptor.

This sequence belongs to the triosephosphate isomerase family.

The enzyme catalyses L-erythrulose 1-phosphate = D-erythrulose 4-phosphate. The protein operates within carbohydrate metabolism. Its function is as follows. Involved in catabolism of D-apiose. Catalyzes the isomerization of L-erythrulose 1-phosphate to D-erythrulose 4-phosphate. The chain is L-erythrulose-1-phosphate isomerase from Pectobacterium atrosepticum (strain SCRI 1043 / ATCC BAA-672) (Erwinia carotovora subsp. atroseptica).